A 312-amino-acid polypeptide reads, in one-letter code: tRNA dimethylallyltransferase (312 aa).

An ATP-binding site is contributed by 13 to 20 (GPTAVGKT). 15–20 (TAVGKT) is a binding site for substrate. Interaction with substrate tRNA regions lie at residues 38-41 (DSVQ) and 163-167 (QRVVR).

The protein belongs to the IPP transferase family. In terms of assembly, monomer. It depends on Mg(2+) as a cofactor.

The enzyme catalyses adenosine(37) in tRNA + dimethylallyl diphosphate = N(6)-dimethylallyladenosine(37) in tRNA + diphosphate. Its function is as follows. Catalyzes the transfer of a dimethylallyl group onto the adenine at position 37 in tRNAs that read codons beginning with uridine, leading to the formation of N6-(dimethylallyl)adenosine (i(6)A). The sequence is that of tRNA dimethylallyltransferase from Exiguobacterium sibiricum (strain DSM 17290 / CCUG 55495 / CIP 109462 / JCM 13490 / 255-15).